We begin with the raw amino-acid sequence, 266 residues long: 5'-nucleotidase SurE (266 aa).

4 residues coordinate a divalent metal cation: D10, D11, S41, and N97.

The protein belongs to the SurE nucleotidase family. A divalent metal cation is required as a cofactor.

The protein resides in the cytoplasm. It carries out the reaction a ribonucleoside 5'-phosphate + H2O = a ribonucleoside + phosphate. Nucleotidase that shows phosphatase activity on nucleoside 5'-monophosphates. In Methanocella arvoryzae (strain DSM 22066 / NBRC 105507 / MRE50), this protein is 5'-nucleotidase SurE.